The primary structure comprises 571 residues: Urease subunit alpha (571 aa).

Positions 133–571 (GGIDTHVHFV…LPLTQRYFLF (439 aa)) constitute a Urease domain. Residues His-138, His-140, and Lys-221 each coordinate Ni(2+). At Lys-221 the chain carries N6-carboxylysine. His-223 serves as a coordination point for substrate. Ni(2+)-binding residues include His-250 and His-276. The active-site Proton donor is the His-324. Asp-364 contacts Ni(2+).

It belongs to the metallo-dependent hydrolases superfamily. Urease alpha subunit family. In terms of assembly, heterotrimer of UreA (gamma), UreB (beta) and UreC (alpha) subunits. Three heterotrimers associate to form the active enzyme. Ni cation is required as a cofactor. In terms of processing, carboxylation allows a single lysine to coordinate two nickel ions.

The protein resides in the cytoplasm. It catalyses the reaction urea + 2 H2O + H(+) = hydrogencarbonate + 2 NH4(+). Its pathway is nitrogen metabolism; urea degradation; CO(2) and NH(3) from urea (urease route): step 1/1. This chain is Urease subunit alpha, found in Staphylococcus xylosus.